Reading from the N-terminus, the 335-residue chain is NmrA-like family domain-containing oxidoreductase hkm9 (335 aa).

Residues 12–17, 38–42, 59–60, 80–82, Lys-137, and 161–164 contribute to the NADP(+) site; these read GATGNQ, RNPNS, DG, INS, and YLEN.

It belongs to the NmrA-type oxidoreductase family.

It functions in the pathway secondary metabolite biosynthesis. In terms of biological role, nmrA-like family domain-containing oxidoreductase; part of the gene cluster that mediates the biosynthesis of hancockiamides, an unusual new family of N-cinnamoylated piperazines. The NRPS hkm10 and the NmrA-like reductase hkm9 are proposed to convert two molecules of L-Phe to the intermediary piperazine called xenocockiamide A. Xenocockiamide A is then converted to hancockiamide D via a series of hydroxylations and O-methylations. The tyrosinase hkm6 may catalyze an aromatic hydroxylation, then the 2-oxoglutarate-dependent Fe(II) dioxygenase hkm4 and the FAD-dependent phenol hydroxylase hkm7 may catalyze consecutive hydroxylations to install 2 more hydroxy groups, and the methyltransferase hkm8 probably catalyzes two methylations using 2 molecules of S-adenosyl-L-methionine (SAM). The NRPS hkm11 activates and transfers trans-cinnamate supplied by the PAL hkm12 to hancockiamide D and produces hancockiamide A. NRPS Hkm11 has the flexibility to tolerate the bulky hancockiamide G as a substrate and the absence of the acetyl-transferase hkm3 opens up the opportunity for hkm11 to introduce a second N-cinnamoyl moiety. The cytochrome P450 monooxygenase hkm5 catalyzes the methylenedioxy bridge formation, converting hancockiamide A into hancockiamide G. Hkm5 can also convert hancockiamide B into hancockiamide C, and hancockiamide D into hancockiamide H. The N-acetyltransferase hkm3 finally transfers an acetyl group to 1-N of piperazine, converting hancockiamide A into hancockiamide B and hancockiamide G into hancockiamide C. The polypeptide is NmrA-like family domain-containing oxidoreductase hkm9 (Aspergillus hancockii).